The primary structure comprises 130 residues: Protein PELPK2 (130 aa).

The signal sequence occupies residues 1–32 (MTLKKSFSASLLSPFLIICLIALLSVPVSVGA). 13 consecutive repeat copies span residues 47–51 (PELPK), 52–56 (PEMPK), 58–62 (PEFPK), 63–67 (LELPK), 69–73 (PEIPK), 74–78 (PEMPK), 80–84 (PEIQK), 91–95 (PELPK), 97–101 (PEFPK), 102–106 (FDFPK), 108–112 (PELPK), 113–117 (PEETK), and 121–125 (FTMPK). Positions 47–125 (PELPKPEMPK…TKVPAFTMPK (79 aa)) are 13 X 5 AA tandem repeat of P-[DEGQ]-[AEFLIV]-[QPT]-K. Residues 71–84 (IPKPEMPKLPEIQK) are compositionally biased toward basic and acidic residues. Residues 71 to 130 (IPKPEMPKLPEIQKPELPTFPELPKMPEFPKFDFPKLPELPKPEETKVPAFTMPKFPGSP) are disordered. A compositionally biased stretch (basic and acidic residues) spans 98 to 117 (EFPKFDFPKLPELPKPEETK).

It is found in the secreted. The protein localises to the cell wall. This is Protein PELPK2 from Arabidopsis thaliana (Mouse-ear cress).